Here is a 158-residue protein sequence, read N- to C-terminus: Glutathione peroxidase-like peroxiredoxin gpx1 (158 aa).

Residue cysteine 36 is the Cysteine sulfenic acid (-SOH) intermediate of the active site. Cysteine 36 and cysteine 82 form a disulfide bridge.

It belongs to the glutathione peroxidase family. As to quaternary structure, monomer.

The protein localises to the cytoplasm. Its subcellular location is the mitochondrion. It carries out the reaction a hydroperoxide + [thioredoxin]-dithiol = an alcohol + [thioredoxin]-disulfide + H2O. Functionally, glutathione peroxidase-like protein that protects cells during oxidative stress. Has peroxidase activity reducing hydrogen peroxide, alkyl and phospholipid hydroperoxides using preferentially thioredoxin as a reducing power. May act as a scavenger of H(2)O(2). The sequence is that of Glutathione peroxidase-like peroxiredoxin gpx1 from Schizosaccharomyces pombe (strain 972 / ATCC 24843) (Fission yeast).